The primary structure comprises 362 residues: MERIVVTLGERSYPITIASGLFNEPASFLPLKSGEQVMLVTNETLAPLYLDKVRGVLEQAGVNVDSVILPDGEQYKSLAVLDTVFTALLQKPHGRDTTLVALGGGVVGDLTGFAAASYQRGVRFIQVPTTLLSQVDSSVGGKTAVNHPLGKNMIGAFYQPASVVVDLDCLKTLPPRELASGLAEVIKYGIILDGAFFNWLEENLDALLRLDGPAMAYCIRRCCELKAEVVAADERETGLRALLNLGHTFGHAIEAEMGYGNWLHGEAVAVGMVMAARTSERLGQFSSAETQRIITLLTRAGLPVNGPREMSAQAYLPHMLRDKKVLAGEMRLILPLAIGKSEVRSGVSHELVLNAIADCQSA.

NAD(+)-binding positions include 71 to 76, 105 to 109, 129 to 130, K142, K151, and 169 to 172; these read DGEQYK, GVVGD, TT, and CLKT. Residues E184, H247, and H264 each contribute to the Zn(2+) site.

It belongs to the sugar phosphate cyclases superfamily. Dehydroquinate synthase family. Co(2+) serves as cofactor. It depends on Zn(2+) as a cofactor. Requires NAD(+) as cofactor.

It is found in the cytoplasm. The catalysed reaction is 7-phospho-2-dehydro-3-deoxy-D-arabino-heptonate = 3-dehydroquinate + phosphate. Its pathway is metabolic intermediate biosynthesis; chorismate biosynthesis; chorismate from D-erythrose 4-phosphate and phosphoenolpyruvate: step 2/7. In terms of biological role, catalyzes the conversion of 3-deoxy-D-arabino-heptulosonate 7-phosphate (DAHP) to dehydroquinate (DHQ). The chain is 3-dehydroquinate synthase from Escherichia coli O81 (strain ED1a).